The primary structure comprises 318 residues: UDP-N-acetylenolpyruvoylglucosamine reductase (318 aa).

Residues 39–202 (VGGPADLLVR…TRVQLTLRPG (164 aa)) form the FAD-binding PCMH-type domain. The active site involves Arg-182. Over residues 214–223 (DRDGRRRTQP) the composition is skewed to basic and acidic residues. The segment at 214-235 (DRDGRRRTQPLDRPTFGSTFTN) is disordered. Ser-231 acts as the Proton donor in catalysis. Glu-301 is an active-site residue.

Belongs to the MurB family. The cofactor is FAD.

The protein localises to the cytoplasm. The enzyme catalyses UDP-N-acetyl-alpha-D-muramate + NADP(+) = UDP-N-acetyl-3-O-(1-carboxyvinyl)-alpha-D-glucosamine + NADPH + H(+). It functions in the pathway cell wall biogenesis; peptidoglycan biosynthesis. Cell wall formation. The protein is UDP-N-acetylenolpyruvoylglucosamine reductase of Anaeromyxobacter sp. (strain Fw109-5).